We begin with the raw amino-acid sequence, 107 residues long: Replication initiation control protein YabA (107 aa).

Positions 80, 82, 97, and 100 each coordinate Zn(2+).

It belongs to the YabA family. In terms of assembly, homotetramer. Interacts with both DnaA and DnaN, acting as a bridge between these two proteins. The cofactor is Zn(2+).

It is found in the cytoplasm. Its subcellular location is the nucleoid. Its function is as follows. Involved in control of chromosome replication initiation. Inhibits the cooperative binding of DnaA to the oriC region, thus negatively regulating initiation of chromosome replication. Inhibits the ability of DnaA-ATP to form a helix on DNA; does not disassemble preformed DnaA-DNA helices. Decreases the residence time of DnaA on the chromosome at its binding sites (oriC, replication forks and promoter-binding sites). Tethers DnaA to the replication machinery via the DNA polymerase beta sliding clamp subunit (dnaN). Associates with oriC and other DnaA targets on the chromosome in a DnaA-dependent manner. This Streptococcus gordonii (strain Challis / ATCC 35105 / BCRC 15272 / CH1 / DL1 / V288) protein is Replication initiation control protein YabA.